A 161-amino-acid chain; its full sequence is Nucleotide-binding protein Rpic_2826 (161 aa).

Belongs to the YajQ family.

Functionally, nucleotide-binding protein. The protein is Nucleotide-binding protein Rpic_2826 of Ralstonia pickettii (strain 12J).